Consider the following 300-residue polypeptide: NAD kinase (300 aa).

The active-site Proton acceptor is the Asp75. Residues 75–76 (DG), 149–150 (ND), Arg177, Asp179, 190–195 (TAYALS), Ala214, and Gln248 contribute to the NAD(+) site.

The protein belongs to the NAD kinase family. It depends on a divalent metal cation as a cofactor.

The protein localises to the cytoplasm. The catalysed reaction is NAD(+) + ATP = ADP + NADP(+) + H(+). Its function is as follows. Involved in the regulation of the intracellular balance of NAD and NADP, and is a key enzyme in the biosynthesis of NADP. Catalyzes specifically the phosphorylation on 2'-hydroxyl of the adenosine moiety of NAD to yield NADP. This is NAD kinase from Burkholderia cenocepacia (strain ATCC BAA-245 / DSM 16553 / LMG 16656 / NCTC 13227 / J2315 / CF5610) (Burkholderia cepacia (strain J2315)).